A 74-amino-acid chain; its full sequence is Protein SlyX homolog (74 aa).

It belongs to the SlyX family.

The sequence is that of Protein SlyX homolog from Aliivibrio fischeri (strain ATCC 700601 / ES114) (Vibrio fischeri).